Reading from the N-terminus, the 104-residue chain is L-rhamnose mutarotase (104 aa).

Tyr18 contributes to the substrate binding site. Catalysis depends on His22, which acts as the Proton donor. Substrate-binding positions include Tyr41 and 76–77 (WW).

It belongs to the rhamnose mutarotase family. In terms of assembly, homodimer.

The protein localises to the cytoplasm. The catalysed reaction is alpha-L-rhamnose = beta-L-rhamnose. Its pathway is carbohydrate metabolism; L-rhamnose metabolism. Involved in the anomeric conversion of L-rhamnose. This Burkholderia cenocepacia (strain HI2424) protein is L-rhamnose mutarotase.